A 301-amino-acid polypeptide reads, in one-letter code: MAARLRDYWDLTKPKVVALIVFTALVGMFLAIPGMPSVVQIQSGALGFLGIWLAAAAAAAINQLLDAKIDAQMARTSWRPLVVGKVRPVQVLVFAGVLITLSMTILTLWVNLITAVLTFTSLIGYAVIYTVYLKRMTSQNIVIGGLAGAMPPMLGWAAVTGLSTAADWINASLLVAIIFVWTPPHFWALAIFRRADYAKASIPMLPVTHGVQHTSRQILLYTVILSVVTLLPVATGMSGVFYLGAALVLDAVFLWYAWRLLDPPDELFAMKTFGYSIVYLMALFAFLMFDHWLRLADFYWN.

9 consecutive transmembrane segments (helical) span residues 16-36, 41-61, 93-113, 114-134, 141-161, 172-192, 217-237, 238-258, and 273-293; these read VVAL…PGMP, IQSG…AAAI, VFAG…VNLI, TAVL…VYLK, IVIG…AVTG, SLLV…LAIF, QILL…ATGM, SGVF…WYAW, and FGYS…DHWL.

It belongs to the UbiA prenyltransferase family. Protoheme IX farnesyltransferase subfamily.

The protein localises to the cell inner membrane. The catalysed reaction is heme b + (2E,6E)-farnesyl diphosphate + H2O = Fe(II)-heme o + diphosphate. It functions in the pathway porphyrin-containing compound metabolism; heme O biosynthesis; heme O from protoheme: step 1/1. Converts heme B (protoheme IX) to heme O by substitution of the vinyl group on carbon 2 of heme B porphyrin ring with a hydroxyethyl farnesyl side group. The sequence is that of Protoheme IX farnesyltransferase from Xylella fastidiosa (strain Temecula1 / ATCC 700964).